A 964-amino-acid polypeptide reads, in one-letter code: Glycine dehydrogenase (decarboxylating) (964 aa).

Residues 1–11 (MNSTLQNQTKT) are compositionally biased toward polar residues. Residues 1–21 (MNSTLQNQTKTNLEKVGTDPL) form a disordered region. The residue at position 713 (K713) is an N6-(pyridoxal phosphate)lysine.

It belongs to the GcvP family. The glycine cleavage system is composed of four proteins: P, T, L and H. Pyridoxal 5'-phosphate is required as a cofactor.

It catalyses the reaction N(6)-[(R)-lipoyl]-L-lysyl-[glycine-cleavage complex H protein] + glycine + H(+) = N(6)-[(R)-S(8)-aminomethyldihydrolipoyl]-L-lysyl-[glycine-cleavage complex H protein] + CO2. The glycine cleavage system catalyzes the degradation of glycine. The P protein binds the alpha-amino group of glycine through its pyridoxal phosphate cofactor; CO(2) is released and the remaining methylamine moiety is then transferred to the lipoamide cofactor of the H protein. This chain is Glycine dehydrogenase (decarboxylating), found in Leptospira interrogans serogroup Icterohaemorrhagiae serovar copenhageni (strain Fiocruz L1-130).